The following is a 647-amino-acid chain: Threonine--tRNA ligase (647 aa).

Positions 1–63 (MDKINITFPD…EEDGSIEIVT (63 aa)) constitute a TGS domain. A catalytic region spans residues 242-540 (DHRKIGKELD…LTEETKGAFP (299 aa)). 3 residues coordinate Zn(2+): Cys-336, His-387, and His-517.

It belongs to the class-II aminoacyl-tRNA synthetase family. As to quaternary structure, homodimer. It depends on Zn(2+) as a cofactor.

It localises to the cytoplasm. The enzyme catalyses tRNA(Thr) + L-threonine + ATP = L-threonyl-tRNA(Thr) + AMP + diphosphate + H(+). In terms of biological role, catalyzes the attachment of threonine to tRNA(Thr) in a two-step reaction: L-threonine is first activated by ATP to form Thr-AMP and then transferred to the acceptor end of tRNA(Thr). Also edits incorrectly charged L-seryl-tRNA(Thr). In Staphylococcus carnosus (strain TM300), this protein is Threonine--tRNA ligase.